The chain runs to 1235 residues: ATP-dependent helicase/nuclease subunit A (1235 aa).

In terms of domain architecture, UvrD-like helicase ATP-binding spans 12–482; that stretch reads SLWTDDQWKA…IDLSQNFRSR (471 aa). ATP is bound at residue 33–40; sequence AAAGSGKT. Residues 509–800 enclose the UvrD-like helicase C-terminal domain; sequence AAELTLGANF…RMMTIHASKG (292 aa).

It belongs to the helicase family. AddA subfamily. Heterodimer of AddA and AddB/RexB. Mg(2+) is required as a cofactor.

The catalysed reaction is Couples ATP hydrolysis with the unwinding of duplex DNA by translocating in the 3'-5' direction.. It carries out the reaction ATP + H2O = ADP + phosphate + H(+). In terms of biological role, the heterodimer acts as both an ATP-dependent DNA helicase and an ATP-dependent, dual-direction single-stranded exonuclease. Recognizes the chi site generating a DNA molecule suitable for the initiation of homologous recombination. The AddA nuclease domain is required for chi fragment generation; this subunit has the helicase and 3' -&gt; 5' nuclease activities. In Listeria monocytogenes serovar 1/2a (strain ATCC BAA-679 / EGD-e), this protein is ATP-dependent helicase/nuclease subunit A.